A 464-amino-acid chain; its full sequence is Formin-like protein 19 (464 aa).

A disordered region spans residues 1 to 74; sequence MSLVDISGAY…PRPCSRPPKT (74 aa). Over residues 14–70 the composition is skewed to pro residues; sequence PLPPPPPPLMRRRAPLPPPPPPPLMRRRAPPPPPPPLMRRRAPPPPPPPPLPRPCSR. The region spanning 68-462 is the FH2 domain; the sequence is CSRPPKTKCS…KAAKEAEMEK (395 aa).

It belongs to the formin-like family. Class-II subfamily.

The polypeptide is Formin-like protein 19 (FH19) (Arabidopsis thaliana (Mouse-ear cress)).